Reading from the N-terminus, the 314-residue chain is Thymidylate synthase (314 aa).

Residues Arg-21 and 176–177 each bind dUMP; that span reads RR. Catalysis depends on Cys-196, which acts as the Nucleophile. DUMP contacts are provided by residues 216-219, Asn-227, and 257-259; these read RSAD and HLY. Residue Asp-219 coordinates (6R)-5,10-methylene-5,6,7,8-tetrahydrofolate. A (6R)-5,10-methylene-5,6,7,8-tetrahydrofolate-binding site is contributed by Ser-313.

The protein belongs to the thymidylate synthase family. Bacterial-type ThyA subfamily. As to quaternary structure, homodimer.

The protein localises to the cytoplasm. It carries out the reaction dUMP + (6R)-5,10-methylene-5,6,7,8-tetrahydrofolate = 7,8-dihydrofolate + dTMP. The protein operates within pyrimidine metabolism; dTTP biosynthesis. Catalyzes the reductive methylation of 2'-deoxyuridine-5'-monophosphate (dUMP) to 2'-deoxythymidine-5'-monophosphate (dTMP) while utilizing 5,10-methylenetetrahydrofolate (mTHF) as the methyl donor and reductant in the reaction, yielding dihydrofolate (DHF) as a by-product. This enzymatic reaction provides an intracellular de novo source of dTMP, an essential precursor for DNA biosynthesis. The protein is Thymidylate synthase of Listeria monocytogenes serotype 4b (strain F2365).